Reading from the N-terminus, the 337-residue chain is Hsp90 co-chaperone Cdc37-like 1 (337 aa).

Residues 1–11 (MEQPWPPPGPW) show a composition bias toward pro residues. Residues 1–42 (MEQPWPPPGPWSLPRAEGEAEEENDLDVFPSSPRCPQLPGGS) are disordered. Residues 2–171 (EQPWPPPGPW…YEQKIRHFGM (170 aa)) are self-association. Residues serine 32 and serine 88 each carry the phosphoserine modification. Residues 85 to 122 (NSESLDQEHAKAQIAVSELRQREEEWRQKEEALVQREK) adopt a coiled-coil conformation. A self-association and interaction with Hsp90 region spans residues 147-277 (KDTEDEDKSE…SRVRLYSQSQ (131 aa)). Residues 267–337 (KSRVRLYSQS…DDEPKMMDTV (71 aa)) are interaction with Hsp70. A required for interaction with STIP1 region spans residues 278 to 337 (SFQPMTVQNHVPHSGVGSIGLLESLPQNPDYLQYSINTALCSLNSVVHKEDDEPKMMDTV).

Belongs to the CDC37 family. Self-associates. Forms complexes with Hsp70 and Hsp90. Interacts with CDC37, FKBP4, PPID and STIP1.

The protein localises to the cytoplasm. Co-chaperone that binds to numerous proteins and promotes their interaction with Hsp70 and Hsp90. This chain is Hsp90 co-chaperone Cdc37-like 1 (CDC37L1), found in Pongo abelii (Sumatran orangutan).